We begin with the raw amino-acid sequence, 88 residues long: Acyl-CoA-binding domain-containing protein 7 (88 aa).

The ACB domain maps to 3–88; it reads LQADFDKAAK…AKELIEKYGI (86 aa). Residues arginine 15, 30 to 34, lysine 56, and tyrosine 75 each bind an acyl-CoA; that span reads YGLYK.

The protein belongs to the ACBD7 family.

Its function is as follows. Binds medium- and long-chain acyl-CoA esters. In Bos taurus (Bovine), this protein is Acyl-CoA-binding domain-containing protein 7 (ACBD7).